Consider the following 686-residue polypeptide: DNA topoisomerase 1 (686 aa).

In terms of domain architecture, Toprim spans 1–141; sequence MILIIAEKPN…KRMKFSALTK (141 aa). Residues E7 and D107 each contribute to the Mg(2+) site. The Topo IA-type catalytic domain occupies 156–574; sequence NFGMANAGIA…EAKERLTKIL (419 aa). Residues 196 to 201 form an interaction with DNA region; that stretch reads STGRVQ. Catalysis depends on Y317, which acts as the O-(5'-phospho-DNA)-tyrosine intermediate. The segment at 606–634 adopts a C4-type 1 zinc-finger fold; sequence CPKCGGDLIVKYNKKTGKRFVGCSNWPKC. A C4-type 2; atypical zinc finger spans residues 653–678; sequence CCNGAPVVIIREEDGREFEICLDINC.

Belongs to the type IA topoisomerase family. Monomer. Mg(2+) is required as a cofactor.

It carries out the reaction ATP-independent breakage of single-stranded DNA, followed by passage and rejoining.. Functionally, releases the supercoiling and torsional tension of DNA, which is introduced during the DNA replication and transcription, by transiently cleaving and rejoining one strand of the DNA duplex. Introduces a single-strand break via transesterification at a target site in duplex DNA. The scissile phosphodiester is attacked by the catalytic tyrosine of the enzyme, resulting in the formation of a DNA-(5'-phosphotyrosyl)-enzyme intermediate and the expulsion of a 3'-OH DNA strand. The free DNA strand then undergoes passage around the unbroken strand, thus removing DNA supercoils. Finally, in the religation step, the DNA 3'-OH attacks the covalent intermediate to expel the active-site tyrosine and restore the DNA phosphodiester backbone. The protein is DNA topoisomerase 1 of Pyrococcus horikoshii (strain ATCC 700860 / DSM 12428 / JCM 9974 / NBRC 100139 / OT-3).